The following is a 143-amino-acid chain: Hemoglobin cathodic subunit alpha (143 aa).

Serine 2 carries the post-translational modification N-acetylserine. A Globin domain is found at 2 to 143; sequence SLTAKDKTLV…VSAALADKYR (142 aa). Histidine 59 contacts O2. Residue histidine 89 participates in heme b binding.

This sequence belongs to the globin family. Heterotetramer of two alpha chains and two beta chains. In terms of tissue distribution, red blood cells.

Involved in oxygen transport from the gills to the various peripheral tissues. The protein is Hemoglobin cathodic subunit alpha of Conger conger (Conger eel).